A 344-amino-acid chain; its full sequence is S-adenosylmethionine:tRNA ribosyltransferase-isomerase (344 aa).

It belongs to the QueA family. As to quaternary structure, monomer.

The protein localises to the cytoplasm. It carries out the reaction 7-aminomethyl-7-carbaguanosine(34) in tRNA + S-adenosyl-L-methionine = epoxyqueuosine(34) in tRNA + adenine + L-methionine + 2 H(+). The protein operates within tRNA modification; tRNA-queuosine biosynthesis. Its function is as follows. Transfers and isomerizes the ribose moiety from AdoMet to the 7-aminomethyl group of 7-deazaguanine (preQ1-tRNA) to give epoxyqueuosine (oQ-tRNA). In Rhizorhabdus wittichii (strain DSM 6014 / CCUG 31198 / JCM 15750 / NBRC 105917 / EY 4224 / RW1) (Sphingomonas wittichii), this protein is S-adenosylmethionine:tRNA ribosyltransferase-isomerase.